A 501-amino-acid chain; its full sequence is Pentatricopeptide repeat-containing protein At4g14190, chloroplastic (501 aa).

The N-terminal 88 residues, 1–88, are a transit peptide targeting the chloroplast; sequence MENLTTAQFL…SGSCPLRLLQ (88 aa). PPR repeat units follow at residues 130–160, 166–200, 201–235, 236–270, and 271–305; these read SENN…MIDD, SLEI…GLLP, ITET…GCVR, DHVT…KMTL, and EPST…GISL.

Belongs to the PPR family. P subfamily.

It is found in the plastid. The protein resides in the chloroplast. The protein is Pentatricopeptide repeat-containing protein At4g14190, chloroplastic of Arabidopsis thaliana (Mouse-ear cress).